A 1376-amino-acid chain; its full sequence is YLP motif-containing protein 1 (1376 aa).

2 disordered regions span residues 1-335 and 511-1058; these read MYPN…PEED and STIP…PPGR. The segment covering 14 to 27 has biased composition (pro residues); that stretch reads YPPPPVPPPPPPVA. Composition is skewed to low complexity over residues 31-50 and 59-80; these read ASPG…SSSG and LAQL…LQPH. 5 stretches are compositionally biased toward pro residues: residues 81-93, 102-114, 148-158, 166-176, and 184-204; these read HLPP…PPVM, QPPP…PPGP, PESPPVPPGSY, MPPPQPPPSYY, and YLPP…PPSI. Polar residues-rich tracts occupy residues 207–216 and 238–260; these read GNKTTIQQEP and STMT…LQQR. Over residues 261–271 the composition is skewed to basic residues; the sequence is TKVHLPGHKKG. Positions 277–286 are enriched in basic and acidic residues; that stretch reads DVPEPIKEEA. Composition is skewed to pro residues over residues 303 to 320, 511 to 537, 545 to 594, and 632 to 641; these read PPLP…PPEE, STIP…PGMP, LPPP…PQGM, and PPSPYHPPPQ. A compositionally biased stretch (polar residues) spans 642–671; the sequence is SEQGNSKPLNKVFSSEQGLGESSSALSQSV. Lysine 675 carries the post-translational modification N6-methyllysine. Positions 698-714 are enriched in basic and acidic residues; sequence RGPREQKEQLQKLKDFG. Composition is skewed to pro residues over residues 738 to 753, 773 to 796, and 840 to 870; these read MYPP…PMGK, TRPP…PPVI, and PVLP…PPPV. Lysine 886 is covalently cross-linked (Glycyl lysine isopeptide (Lys-Gly) (interchain with G-Cter in SUMO2)). 4 stretches are compositionally biased toward basic and acidic residues: residues 896 to 930, 937 to 1004, 1013 to 1023, and 1039 to 1058; these read ITLR…EPYF, TDHR…DRPP, GERRTYPEERM, and RVEK…PPGR. A Glycyl lysine isopeptide (Lys-Gly) (interchain with G-Cter in SUMO2) cross-link involves residue lysine 943. An involved in interaction with PPP1CA region spans residues 1326 to 1333; that stretch reads KKRVRWAD.

Interacts with PPP1CA and NCOA5. Forms a complex with ILF2, ILF3, KHDRBS1, RBMX, NCOA5 and PPP1CA. As to expression, high level expression seen in the brain, adipose tissue, heart and kidney, with a low level expression in muscle, spleen and lung (at protein level).

The protein localises to the nucleus. It is found in the nucleus speckle. Plays a role in the reduction of telomerase activity during differentiation of embryonic stem cells by binding to the core promoter of TERT and controlling its down-regulation. In Rattus norvegicus (Rat), this protein is YLP motif-containing protein 1 (Ylpm1).